Here is a 462-residue protein sequence, read N- to C-terminus: Glycine--tRNA ligase (462 aa).

Residues Arg-100 and Glu-174 each coordinate substrate. ATP-binding positions include 206–208 (RNE), 216–221 (FRTREF), 290–291 (EL), and 334–337 (GVDR). 221–225 (FEQME) lines the substrate pocket. Residue 330 to 334 (EPSVG) participates in substrate binding.

The protein belongs to the class-II aminoacyl-tRNA synthetase family. Homodimer.

The protein localises to the cytoplasm. It catalyses the reaction tRNA(Gly) + glycine + ATP = glycyl-tRNA(Gly) + AMP + diphosphate. Its function is as follows. Catalyzes the attachment of glycine to tRNA(Gly). The protein is Glycine--tRNA ligase of Alkaliphilus oremlandii (strain OhILAs) (Clostridium oremlandii (strain OhILAs)).